The chain runs to 427 residues: Serine--tRNA ligase (427 aa).

236 to 238 lines the L-serine pocket; the sequence is TAE. 267-269 provides a ligand contact to ATP; that stretch reads RRE. Glutamate 290 provides a ligand contact to L-serine. 354–357 serves as a coordination point for ATP; the sequence is EISS. Serine 390 provides a ligand contact to L-serine.

It belongs to the class-II aminoacyl-tRNA synthetase family. Type-1 seryl-tRNA synthetase subfamily. As to quaternary structure, homodimer. The tRNA molecule binds across the dimer.

The protein resides in the cytoplasm. The enzyme catalyses tRNA(Ser) + L-serine + ATP = L-seryl-tRNA(Ser) + AMP + diphosphate + H(+). It catalyses the reaction tRNA(Sec) + L-serine + ATP = L-seryl-tRNA(Sec) + AMP + diphosphate + H(+). The protein operates within aminoacyl-tRNA biosynthesis; selenocysteinyl-tRNA(Sec) biosynthesis; L-seryl-tRNA(Sec) from L-serine and tRNA(Sec): step 1/1. Its function is as follows. Catalyzes the attachment of serine to tRNA(Ser). Is also able to aminoacylate tRNA(Sec) with serine, to form the misacylated tRNA L-seryl-tRNA(Sec), which will be further converted into selenocysteinyl-tRNA(Sec). This is Serine--tRNA ligase from Picosynechococcus sp. (strain ATCC 27264 / PCC 7002 / PR-6) (Agmenellum quadruplicatum).